The following is a 369-amino-acid chain: Methylthioribose-1-phosphate isomerase (369 aa).

Residues 54–56, Arg-95, and Gln-208 each bind substrate; that span reads RGA. Residue Asp-249 is the Proton donor of the active site. 259–260 contacts substrate; the sequence is NK.

Belongs to the eIF-2B alpha/beta/delta subunits family. MtnA subfamily.

The enzyme catalyses 5-(methylsulfanyl)-alpha-D-ribose 1-phosphate = 5-(methylsulfanyl)-D-ribulose 1-phosphate. The protein operates within amino-acid biosynthesis; L-methionine biosynthesis via salvage pathway; L-methionine from S-methyl-5-thio-alpha-D-ribose 1-phosphate: step 1/6. Its function is as follows. Catalyzes the interconversion of methylthioribose-1-phosphate (MTR-1-P) into methylthioribulose-1-phosphate (MTRu-1-P). This is Methylthioribose-1-phosphate isomerase from Desulfatibacillum aliphaticivorans.